A 172-amino-acid chain; its full sequence is Ribosomally synthesized cyclic peptide phomopsin precursor phomA (172 aa).

An N-terminal signal peptide occupies residues 1 to 18 (MRFTPAIVIAAFCSLAVA). 11 propeptides span residues 19–35 (APAA…AVED), 42–50 (KKRGEAVED), 57–65 (KKRGEAVED), 72–79 (KRGEAVED), 86–93 (KRGEAVED), 100–108 (KKRGEAVED), 115–122 (KRGEAVED), 129–137 (RKRGEAVED), 144–151 (KRGEAVED), 158–165 (KRGEAVED), and Lys172.

In terms of processing, phomA is processed by several endopeptidases including kexin proteases as well as the cluster-specific S41 family peptidase phomP1 and the oligopeptidase phomG to produce 10 identical copies of the hexapeptide Tyr-Val-Ile-Pro-Ile-Asp, that is further modified to yield phomapsins. The timing and order of proteolysis of the phomA precursor and PTMs are still unknown. Two tyrosinase-like enzymes, phomQ1 and phomQ2, catalyze the chlorination and hydroxylation of Tyr, respectively. PhomYb, is proposed to be involved in the construction of the macrocyclic structure. The other 4 ustYa family proteins may be involved in PTMs that generate the unique structure of phomopsin A. PhomYa is required for the hydroxylation of C-beta of Tyr. PhomYc, phomYd, and phomYe are responsible for the biosynthesis of 2,3-dehydroisoleucine (dIle), 2,3-dehydroaspartic acid (dAsp), and 3,4-dehydroproline (dPro), respectively. While dIle formation by phomYc is indispensable for the installation of dAsp by phomYd, the order of the other PTMs have not been elucidated yet. Most of the biosynthetic enzymes likely have broad substrate specificity, and thus, there might be a metabolic grid from a precursor to phomopsin A. The enzyme(s) responsible for the biosynthesis of 3,4-dehydrovaline (dVal) have also not been identified yet. Finally, phomM acts as an S-adenosylmethionine-dependent alpha-N-methyltransferase that catalyzes two successive N-methylation reactions, converting N-desmethyl-phomopsin A to phomopsin A and phomopsin A further to an N,N-dimethylated congener called phomopsin E.

It participates in mycotoxin biosynthesis. Its function is as follows. Ribosomally synthesized cyclic peptide phomopsin precursor; part of the gene cluster that mediates the biosynthesis of the phomopsins, a group of hexapeptide mycotoxins which infects lupins and causes lupinosis disease in livestock. The phomA translated product contains a 10-fold repeated peptide embedding the hexapeptide Tyr-Val-Ile-Pro-Ile-Asp, that is converted into phomapsins. After being excised from the precursor peptide by kexin proteases, the core peptides are cyclized and modified post-translationally by enzymes encoded within the corresponding gene cluster. In Diaporthe leptostromiformis (Lupinosis disease fungus), this protein is Ribosomally synthesized cyclic peptide phomopsin precursor phomA.